A 926-amino-acid chain; its full sequence is DNA mismatch repair protein MutS (926 aa).

The tract at residues 1 to 60 is disordered; the sequence is MAASQNPIQGSLFGGNEESDLNKAEKLKGSERSNVNLSHQQLKEDASLRPRIKQTPKNPN. Residues 20–31 show a composition bias toward basic and acidic residues; sequence DLNKAEKLKGSE. 726 to 733 lines the ATP pocket; the sequence is GPNASGKS.

This sequence belongs to the DNA mismatch repair MutS family.

In terms of biological role, this protein is involved in the repair of mismatches in DNA. It is possible that it carries out the mismatch recognition step. This protein has a weak ATPase activity. This chain is DNA mismatch repair protein MutS, found in Prochlorococcus marinus (strain NATL2A).